A 222-amino-acid polypeptide reads, in one-letter code: GTP cyclohydrolase 1 (222 aa).

Residues C111, H114, and C182 each contribute to the Zn(2+) site.

Belongs to the GTP cyclohydrolase I family. As to quaternary structure, toroid-shaped homodecamer, composed of two pentamers of five dimers.

The enzyme catalyses GTP + H2O = 7,8-dihydroneopterin 3'-triphosphate + formate + H(+). Its pathway is cofactor biosynthesis; 7,8-dihydroneopterin triphosphate biosynthesis; 7,8-dihydroneopterin triphosphate from GTP: step 1/1. The polypeptide is GTP cyclohydrolase 1 (Citrobacter koseri (strain ATCC BAA-895 / CDC 4225-83 / SGSC4696)).